The sequence spans 409 residues: LL-diaminopimelate aminotransferase (409 aa).

The substrate site is built by Tyr15 and Gly42. Pyridoxal 5'-phosphate contacts are provided by residues Tyr72, 108 to 109 (AK), Tyr132, Asn186, Tyr217, and 245 to 247 (SFS). Residues Lys109, Tyr132, and Asn186 each contribute to the substrate site. At Lys248 the chain carries N6-(pyridoxal phosphate)lysine. Residues Arg256 and Asn291 each contribute to the pyridoxal 5'-phosphate site. Residues Asn291 and Arg387 each coordinate substrate.

Belongs to the class-I pyridoxal-phosphate-dependent aminotransferase family. LL-diaminopimelate aminotransferase subfamily. In terms of assembly, homodimer. Requires pyridoxal 5'-phosphate as cofactor.

It catalyses the reaction (2S,6S)-2,6-diaminopimelate + 2-oxoglutarate = (S)-2,3,4,5-tetrahydrodipicolinate + L-glutamate + H2O + H(+). It functions in the pathway amino-acid biosynthesis; L-lysine biosynthesis via DAP pathway; LL-2,6-diaminopimelate from (S)-tetrahydrodipicolinate (aminotransferase route): step 1/1. Its function is as follows. Involved in the synthesis of meso-diaminopimelate (m-DAP or DL-DAP), required for both lysine and peptidoglycan biosynthesis. Catalyzes the direct conversion of tetrahydrodipicolinate to LL-diaminopimelate. This is LL-diaminopimelate aminotransferase from Phocaeicola vulgatus (strain ATCC 8482 / DSM 1447 / JCM 5826 / CCUG 4940 / NBRC 14291 / NCTC 11154) (Bacteroides vulgatus).